A 393-amino-acid chain; its full sequence is Cytochrome b (393 aa).

The next 4 helical transmembrane spans lie at 38–58 (FGSL…FLAM), 82–104 (WLLR…LHIF), 119–139 (VWCL…IGYV), and 185–205 (FFSL…LHLA). Residues His88 and His102 each contribute to the heme b site. The heme b site is built by His189 and His203. An a ubiquinone-binding site is contributed by His208. The next 4 membrane-spanning stretches (helical) occupy residues 231-251 (FYVK…IWIF), 295-315 (VGGV…PFFK), 327-347 (IYQG…WIGC), and 354-373 (FVTI…AITP).

It belongs to the cytochrome b family. As to quaternary structure, the main subunits of complex b-c1 are: cytochrome b, cytochrome c1 and the Rieske protein. Requires heme b as cofactor. Post-translationally, first mitochondrial-encoded protein to be shown to have its N-terminal methionine cleaved off.

The protein localises to the mitochondrion inner membrane. Functionally, component of the ubiquinol-cytochrome c reductase complex (complex III or cytochrome b-c1 complex) that is part of the mitochondrial respiratory chain. The b-c1 complex mediates electron transfer from ubiquinol to cytochrome c. Contributes to the generation of a proton gradient across the mitochondrial membrane that is then used for ATP synthesis. The sequence is that of Cytochrome b (MT-CYB) from Solanum tuberosum (Potato).